Consider the following 417-residue polypeptide: UDP-N-acetylglucosamine 1-carboxyvinyltransferase (417 aa).

A phosphoenolpyruvate-binding site is contributed by 22-23; sequence KN. R93 provides a ligand contact to UDP-N-acetyl-alpha-D-glucosamine. C117 (proton donor) is an active-site residue. C117 is modified (2-(S-cysteinyl)pyruvic acid O-phosphothioketal). UDP-N-acetyl-alpha-D-glucosamine-binding positions include 122 to 126, D305, and I327; that span reads RPVDQ.

This sequence belongs to the EPSP synthase family. MurA subfamily.

It localises to the cytoplasm. It catalyses the reaction phosphoenolpyruvate + UDP-N-acetyl-alpha-D-glucosamine = UDP-N-acetyl-3-O-(1-carboxyvinyl)-alpha-D-glucosamine + phosphate. Its pathway is cell wall biogenesis; peptidoglycan biosynthesis. Its function is as follows. Cell wall formation. Adds enolpyruvyl to UDP-N-acetylglucosamine. This is UDP-N-acetylglucosamine 1-carboxyvinyltransferase from Dechloromonas aromatica (strain RCB).